We begin with the raw amino-acid sequence, 585 residues long: Chaperonin GroEL, chloroplastic (585 aa).

ATP contacts are provided by residues 55–58 (TLGP), 113–117 (DGTTT), Gly442, 507–509 (NAA), and Asp523.

This sequence belongs to the chaperonin (HSP60) family. In terms of assembly, forms a cylinder of 14 subunits composed of two heptameric rings stacked back-to-back. Interacts with the co-chaperonin GroES.

It localises to the plastid. Its subcellular location is the chloroplast. It catalyses the reaction ATP + H2O + a folded polypeptide = ADP + phosphate + an unfolded polypeptide.. Together with its co-chaperonin GroES, plays an essential role in assisting protein folding. The GroEL-GroES system forms a nano-cage that allows encapsulation of the non-native substrate proteins and provides a physical environment optimized to promote and accelerate protein folding. This is Chaperonin GroEL, chloroplastic from Pyrenomonas salina.